Reading from the N-terminus, the 235-residue chain is Large ribosomal subunit protein uL1 (235 aa).

The protein belongs to the universal ribosomal protein uL1 family. Part of the 50S ribosomal subunit.

Binds directly to 23S rRNA. The L1 stalk is quite mobile in the ribosome, and is involved in E site tRNA release. In terms of biological role, protein L1 is also a translational repressor protein, it controls the translation of the L11 operon by binding to its mRNA. This Synechococcus sp. (strain CC9311) protein is Large ribosomal subunit protein uL1.